The sequence spans 221 residues: Hydrogenase expression/formation protein HupD (221 aa).

3 residues coordinate Ni(2+): glutamate 20, aspartate 66, and histidine 97.

The protein belongs to the peptidase A31 family.

Not known. Could be involved in the processing of hydrogenase. In Thiocapsa roseopersicina, this protein is Hydrogenase expression/formation protein HupD (hupD).